The primary structure comprises 66 residues: Conotoxin Lt3.5 (66 aa).

The N-terminal stretch at 1 to 20 (MMSKLGALLTICLLLFPLTA) is a signal peptide. A propeptide spanning residues 21–53 (VPLDGDQPLDRHAERMHDGISPKRHPWFDPVKR) is cleaved from the precursor. Intrachain disulfides connect cysteine 54–cysteine 66, cysteine 55–cysteine 62, and cysteine 59–cysteine 65. Proline 64 is modified (4-hydroxyproline).

Belongs to the conotoxin M superfamily. As to expression, expressed by the venom duct.

The protein localises to the secreted. The chain is Conotoxin Lt3.5 from Conus litteratus (Lettered cone).